The chain runs to 262 residues: Capsid protein (262 aa).

The segment at 183 to 262 (APTIEAITRP…SHHRSPSPRK (80 aa)) is disordered. A Bipartite nuclear localization signal motif is present at residues 215-233 (RRRKVKTTVVYGRRRSKSR). Basic residues predominate over residues 215–234 (RRRKVKTTVVYGRRRSKSRD). Residues Ser232, Ser239, and Ser245 each carry the phosphoserine; by host modification. The span at 252 to 262 (SSHHRSPSPRK) shows a compositional bias: basic residues. The RNA binding stretch occupies residues 254 to 260 (HHRSPSP).

This sequence belongs to the avihepadnavirus core antigen family. Homodimerizes, then multimerizes.

The protein localises to the virion. Its subcellular location is the host cytoplasm. In terms of biological role, self assembles to form an icosahedral capsid. Most capsid appear to be large particles with an icosahedral symmetry of T=4 and consist of 240 copies of capsid protein, though a fraction forms smaller T=3 particles consisting of 180 capsid proteins. Entering capsid are transported along microtubules to the nucleus. Phosphorylation of the capsid is thought to induce exposure of nuclear localization signal in the C-terminal portion of the capsid protein that allows binding to the nuclear pore complex via the importin (karyopherin-) alpha and beta. Capsids are imported in intact form through the nuclear pore into the nuclear basket, where it probably binds NUP153. Only capsids that contain the mature viral genome can release the viral DNA and capsid protein into the nucleoplasm. Immature capsids get stucked in the basket. Capsids encapsulate the pre-genomic RNA and the P protein. Pre-genomic RNA is reverse transcribed into DNA while the capsid is still in the cytoplasm. The capsid can then either be directed to the nucleus, providing more genome for transcription, or bud through the endoplasmic reticulum to provide new virions. This Anas (ducks) protein is Capsid protein (C).